The following is a 317-amino-acid chain: Testis-expressed protein 19.2 (317 aa).

The segment covering methionine 64–glutamate 75 has biased composition (acidic residues). A disordered region spans residues methionine 64 to glutamine 113. The important for interaction with piRNA stretch occupies residues glutamine 101 to leucine 145.

Interacts with UBR2. Interacts with piRNA-associated proteins DDX4, EDC4, MAEL, PIWIL1, PIWIL2, RANBP9 and TDRD6. In terms of tissue distribution, specifically expressed in somatic cells of male gonad lineage.

The protein localises to the cytoplasm. Functionally, may be required during spermatogenesis, probably by participating in the repression of retrotransposable elements and prevent their mobilization. With its paralog, Tex19.1, collaborates with the Piwi-interacting RNA (piRNA) pathway, which mediates the repression of transposable elements during meiosis by forming complexes composed of piRNAs and Piwi proteins. Interacts with Piwi proteins and directly binds piRNAs, a class of 24 to 30 nucleotide RNAs that are generated by a Dicer-independent mechanism and are primarily derived from transposons and other repeated sequence elements. The protein is Testis-expressed protein 19.2 (Tex19.2) of Mus musculus (Mouse).